The sequence spans 422 residues: Roquefortine prenyltransferase roqD (422 aa).

Glu100 contributes to the substrate binding site. Residues Arg113, Lys200, and Tyr202 each coordinate dimethylallyl diphosphate. Substrate is bound at residue Tyr204. Dimethylallyl diphosphate-binding residues include Lys268, Tyr270, Tyr353, Tyr416, and Tyr420.

The protein belongs to the tryptophan dimethylallyltransferase family.

It functions in the pathway alkaloid biosynthesis. Functionally, roquefortine prenyltransferase; part of the gene cluster that mediates the biosynthesis of the mycotoxins roquefortine C and meleagrin. The first stage is catalyzed by the dipeptide synthase roqA which condenses histidine and tryptophan to produce histidyltryptophanyldiketopiperazine (HTD). HTD is then converted to roquefortine C through two possible pathways. In the first pathway, prenyltransferase roqD transforms HTD to the intermediate roquefortine D, which is in turn converted to roquefortine C by the cytochrome P450 monooxygenase roqR. In the second pathway, HTD is first converted to the intermediate dehydrohistidyltryptophanyldi-ketopiperazine (DHTD) by roqR which is then prenylated by roqD to form roquefortine C. Roquefortine C can be further transformed to meleagrin via three more reactions including oxydation to glandicolin A by roqM, which is further reduced to glandicoline B by roqO. Finally, glandicoline B is converted to meleagrin by the glandicoline B O-methyltransferase roqN. More studies identified further branching and additional metabolites produced by the roquefortine/meleagrin cluster, including roquefortine F, roquefortine L, roquefortine M, roquefortine N and neoxaline. The chain is Roquefortine prenyltransferase roqD from Penicillium rubens (strain ATCC 28089 / DSM 1075 / NRRL 1951 / Wisconsin 54-1255) (Penicillium chrysogenum).